The following is a 202-amino-acid chain: Small ribosomal subunit protein uS4c (202 aa).

Positions 90–153 (MRLDNIIFRL…KSEAIISKNI (64 aa)) constitute an S4 RNA-binding domain.

It belongs to the universal ribosomal protein uS4 family. In terms of assembly, part of the 30S ribosomal subunit. Contacts protein S5. The interaction surface between S4 and S5 is involved in control of translational fidelity.

It is found in the plastid. The protein resides in the chloroplast. Its function is as follows. One of the primary rRNA binding proteins, it binds directly to 16S rRNA where it nucleates assembly of the body of the 30S subunit. Functionally, with S5 and S12 plays an important role in translational accuracy. This is Small ribosomal subunit protein uS4c (rps4) from Hookeria lucens (Moss).